Here is a 489-residue protein sequence, read N- to C-terminus: Netrin-5 (489 aa).

Positions 1–16 (MPVTFALLLLLGQATA) are cleaved as a signal peptide. N-linked (GlcNAc...) asparagine glycosylation is present at N62. 15 disulfide bridges follow: C157–C166, C159–C175, C177–C186, C189–C209, C212–C221, C214–C239, C242–C251, C254–C272, C275–C287, C277–C294, C296–C305, C308–C322, C345–C418, C349–C420, and C364–C475. 3 consecutive Laminin EGF-like domains span residues 157–211 (CQCH…PCLP), 212–274 (CSCN…ACRA), and 275–324 (CQCH…PCQR). The 131-residue stretch at 345-475 (CQNYCNMSDT…LQQEERAGGC (131 aa)) folds into the NTR domain. A disordered region spans residues 470–489 (ERAGGCRGVRAPTPSPRPEH).

It is found in the secreted. Plays a role in neurogenesis. Prevents motor neuron cell body migration out of the neural tube. The polypeptide is Netrin-5 (NTN5) (Homo sapiens (Human)).